The sequence spans 598 residues: Elongation factor 4 (598 aa).

The region spanning 4 to 181 is the tr-type G domain; that stretch reads KKIRNFAIIA…AIVNLIPPPQ (178 aa). Residues 16 to 21 and 128 to 131 each bind GTP; these read DHGKST and NKID.

This sequence belongs to the TRAFAC class translation factor GTPase superfamily. Classic translation factor GTPase family. LepA subfamily.

The protein localises to the cell membrane. The catalysed reaction is GTP + H2O = GDP + phosphate + H(+). Functionally, required for accurate and efficient protein synthesis under certain stress conditions. May act as a fidelity factor of the translation reaction, by catalyzing a one-codon backward translocation of tRNAs on improperly translocated ribosomes. Back-translocation proceeds from a post-translocation (POST) complex to a pre-translocation (PRE) complex, thus giving elongation factor G a second chance to translocate the tRNAs correctly. Binds to ribosomes in a GTP-dependent manner. The polypeptide is Elongation factor 4 (Mesomycoplasma hyopneumoniae (strain 7448) (Mycoplasma hyopneumoniae)).